Consider the following 179-residue polypeptide: NADH dehydrogenase [ubiquinone] 1 beta subcomplex subunit 9 (179 aa).

Ala-2 carries the post-translational modification N-acetylalanine. At Ser-85 the chain carries Phosphoserine. The disordered stretch occupies residues 139–160; the sequence is QLQEETPVGGPRTEALPPARKQ.

Belongs to the complex I LYR family. In terms of assembly, mammalian complex I is composed of 45 different subunits.

It localises to the mitochondrion inner membrane. In terms of biological role, accessory subunit of the mitochondrial membrane respiratory chain NADH dehydrogenase (Complex I), that is believed to be not involved in catalysis. Complex I functions in the transfer of electrons from NADH to the respiratory chain. The immediate electron acceptor for the enzyme is believed to be ubiquinone. In Bos taurus (Bovine), this protein is NADH dehydrogenase [ubiquinone] 1 beta subcomplex subunit 9 (NDUFB9).